The chain runs to 269 residues: Sororin (269 aa).

Disordered regions lie at residues 1–39 (MSEG…IMKR), 56–110 (VNTG…PKIN), and 146–169 (SLNS…STPN). The span at 57–66 (NTGSQSTPKV) shows a compositional bias: polar residues. The KEN box motif lies at 85-87 (KEN). Positions 146–155 (SLNSSSSLYS) are enriched in low complexity. The FGF motif motif lies at 180 to 182 (FGF). Residues 247–269 (LDEWAAFMNAEFEEAEKFDLTVE) form a C-terminal Sororin domain region.

The protein belongs to the sororin family. Interacts with the APC/C complex. Interacts with the chromatin-bound cohesin complex; the interaction is indirect, occurs after DNA replication and requires acetylation of the cohesin component smc3. Interacts (via the FGF motif) with pds5a and pds5b; the interaction is direct and prevents the interaction of pds5a with wapl. In terms of processing, ubiquitinated by the APC/C complex in G1, leading to its degradation.

It localises to the nucleus. Its subcellular location is the chromosome. The protein localises to the cytoplasm. Functionally, regulator of sister chromatid cohesion in mitosis stabilizing cohesin complex association with chromatin. May antagonize the action of wapl which stimulates cohesin dissociation from chromatin. Cohesion ensures that chromosome partitioning is accurate in both meiotic and mitotic cells and plays an important role in DNA repair. Required for efficient DNA double-stranded break repair. This Xenopus laevis (African clawed frog) protein is Sororin (cdca5-a).